The chain runs to 335 residues: Ferrochelatase (335 aa).

Fe cation contacts are provided by histidine 194 and glutamate 275.

The protein belongs to the ferrochelatase family.

Its subcellular location is the cytoplasm. The catalysed reaction is heme b + 2 H(+) = protoporphyrin IX + Fe(2+). The protein operates within porphyrin-containing compound metabolism; protoheme biosynthesis; protoheme from protoporphyrin-IX: step 1/1. Functionally, catalyzes the ferrous insertion into protoporphyrin IX. The protein is Ferrochelatase of Sodalis glossinidius (strain morsitans).